A 500-amino-acid polypeptide reads, in one-letter code: MTIFDNYEVWFVIGSQHLYGAETLRQVTQHAEHVVNALNTEAKLPCKLVLKPLGTSPDEITAICRDANYDDRCAGLVVWLHTFSPAKMWINGLSILNKPLLQFHTQFNAALPWDSIDMDFMNLNQTAHGGREFGFIGARMRQQHAVVTGHWQDKEAHTRIGAWMRQAVSKQDTRQLKVCRFGDNMREVAVTDGDKVAAQIKFGFSVNTWAVGDLVQVVNSIGDGDINALIDEYESSYTLTPATQIHGDKRQNVREAARIELGMKRFLEQGGFHAFTTTFEDLHGLKQLPGLAVQRLMQQGYGFAGEGDWKTAALLRIMKVMSTGLQGGTSFMEDYTYHFEKGNDLVLGSHMLEVCPSIAVEEKPILDVQHLGIGGKEDPARLIFNTQTGPAIVASLIDLGDRYRLLVNCIDTVKTPHSLPKLPVANALWKAQPDLPTASEAWILAGGAHHTVFSHALDLNDMRQFAEIHDIEIAVIDNDTHLPAFKDALRWNEVYYGFKR.

Residues glutamate 306, glutamate 333, histidine 350, and histidine 450 each contribute to the Mn(2+) site.

Belongs to the arabinose isomerase family. In terms of assembly, homohexamer. It depends on Mn(2+) as a cofactor.

It catalyses the reaction beta-L-arabinopyranose = L-ribulose. It functions in the pathway carbohydrate degradation; L-arabinose degradation via L-ribulose; D-xylulose 5-phosphate from L-arabinose (bacterial route): step 1/3. Functionally, catalyzes the conversion of L-arabinose to L-ribulose. This Salmonella newport (strain SL254) protein is L-arabinose isomerase.